We begin with the raw amino-acid sequence, 423 residues long: Autophagy-related protein 18 (423 aa).

4 WD repeats span residues 1–34 (MNYV…KIFT), 183–223 (AHRA…KLYQ), 228–267 (TYPS…TGMP), and 367–407 (SRSG…GGEG). The L/FRRG motif motif lies at 224 to 228 (FRRGT). The segment at 260–320 (GGPVTGMPES…KSTGTFGSMI (61 aa)) is disordered.

The protein belongs to the WD repeat PROPPIN family. Component of the PI(3,5)P2 regulatory complex.

It is found in the preautophagosomal structure membrane. The protein resides in the vacuole membrane. The protein localises to the endosome membrane. In terms of biological role, the PI(3,5)P2 regulatory complex regulates both the synthesis and turnover of phosphatidylinositol 3,5-bisphosphate (PtdIns(3,5)P2). Necessary for proper vacuole morphology. Plays an important role in osmotically-induced vacuole fragmentation. Required for cytoplasm to vacuole transport (Cvt) vesicle formation, pexophagy and starvation-induced autophagy. Involved in correct atg9 trafficking to the pre-autophagosomal structure. Might also be involved in premeiotic DNA replication. The chain is Autophagy-related protein 18 (atg18) from Sclerotinia sclerotiorum (strain ATCC 18683 / 1980 / Ss-1) (White mold).